A 448-amino-acid chain; its full sequence is N-succinylarginine dihydrolase (448 aa).

Substrate contacts are provided by residues 20–29 (AGLLFGNEAS), Asn-111, and 138–139 (HR). Glu-175 is a catalytic residue. Substrate is bound at residue Arg-213. His-249 is a catalytic residue. 2 residues coordinate substrate: Asp-251 and Asn-360. Cys-366 serves as the catalytic Nucleophile.

It belongs to the succinylarginine dihydrolase family. In terms of assembly, homodimer.

It carries out the reaction N(2)-succinyl-L-arginine + 2 H2O + 2 H(+) = N(2)-succinyl-L-ornithine + 2 NH4(+) + CO2. It functions in the pathway amino-acid degradation; L-arginine degradation via AST pathway; L-glutamate and succinate from L-arginine: step 2/5. In terms of biological role, catalyzes the hydrolysis of N(2)-succinylarginine into N(2)-succinylornithine, ammonia and CO(2). The protein is N-succinylarginine dihydrolase of Shigella dysenteriae serotype 1 (strain Sd197).